Consider the following 181-residue polypeptide: UPF0232 protein MAP_0004 (181 aa).

Positions 1-11 (MSDDQSPSPSG) are enriched in polar residues. Disordered stretches follow at residues 1 to 70 (MSDD…PQPL) and 161 to 181 (APSW…DTYG). Residues 18-39 (LVRRTLEEARAAARAQGKDAGR) show a composition bias toward basic and acidic residues. The span at 40-50 (GRAAAPTPRRV) shows a compositional bias: low complexity.

This sequence belongs to the UPF0232 family.

The polypeptide is UPF0232 protein MAP_0004 (Mycolicibacterium paratuberculosis (strain ATCC BAA-968 / K-10) (Mycobacterium paratuberculosis)).